The primary structure comprises 579 residues: Adenine deaminase (579 aa).

It belongs to the metallo-dependent hydrolases superfamily. Adenine deaminase family. Mn(2+) is required as a cofactor.

It catalyses the reaction adenine + H2O + H(+) = hypoxanthine + NH4(+). The chain is Adenine deaminase from Listeria monocytogenes serotype 4b (strain F2365).